The primary structure comprises 345 residues: Phosphoribosylformylglycinamidine cyclo-ligase (345 aa).

The protein belongs to the AIR synthase family.

Its subcellular location is the cytoplasm. The enzyme catalyses 2-formamido-N(1)-(5-O-phospho-beta-D-ribosyl)acetamidine + ATP = 5-amino-1-(5-phospho-beta-D-ribosyl)imidazole + ADP + phosphate + H(+). It participates in purine metabolism; IMP biosynthesis via de novo pathway; 5-amino-1-(5-phospho-D-ribosyl)imidazole from N(2)-formyl-N(1)-(5-phospho-D-ribosyl)glycinamide: step 2/2. This Prochlorococcus marinus (strain MIT 9313) protein is Phosphoribosylformylglycinamidine cyclo-ligase.